A 145-amino-acid chain; its full sequence is Cytochrome b (145 aa).

A helical transmembrane segment spans residues 38–58 (FFALHFLLPFVLAALALMHLI). The heme b site is built by His-42 and His-56. His-61 contacts a ubiquinone. A helical transmembrane segment spans residues 85–105 (FIFKDLVTIFIFFIVLSIFVF).

It belongs to the cytochrome b family. As to quaternary structure, fungal cytochrome b-c1 complex contains 10 subunits; 3 respiratory subunits, 2 core proteins and 5 low-molecular weight proteins. Cytochrome b-c1 complex is a homodimer. Heme b is required as a cofactor.

It is found in the mitochondrion inner membrane. Component of the ubiquinol-cytochrome c reductase complex (complex III or cytochrome b-c1 complex) that is part of the mitochondrial respiratory chain. The b-c1 complex mediates electron transfer from ubiquinol to cytochrome c. Contributes to the generation of a proton gradient across the mitochondrial membrane that is then used for ATP synthesis. The protein is Cytochrome b (cob) of Aspergillus flavus.